Here is a 66-residue protein sequence, read N- to C-terminus: DNA-directed RNA polymerase subunit omega (66 aa).

Belongs to the RNA polymerase subunit omega family. In terms of assembly, the RNAP catalytic core consists of 2 alpha, 1 beta, 1 beta' and 1 omega subunit. When a sigma factor is associated with the core the holoenzyme is formed, which can initiate transcription.

The enzyme catalyses RNA(n) + a ribonucleoside 5'-triphosphate = RNA(n+1) + diphosphate. Promotes RNA polymerase assembly. Latches the N- and C-terminal regions of the beta' subunit thereby facilitating its interaction with the beta and alpha subunits. The protein is DNA-directed RNA polymerase subunit omega of Clostridium botulinum (strain Alaska E43 / Type E3).